Here is a 304-residue protein sequence, read N- to C-terminus: Acetaldehyde dehydrogenase 1 (304 aa).

Cysteine 131 acts as the Acyl-thioester intermediate in catalysis. Residues serine 162–asparagine 170 and asparagine 273 contribute to the NAD(+) site.

It belongs to the acetaldehyde dehydrogenase family.

The catalysed reaction is acetaldehyde + NAD(+) + CoA = acetyl-CoA + NADH + H(+). This is Acetaldehyde dehydrogenase 1 from Dechloromonas aromatica (strain RCB).